A 380-amino-acid polypeptide reads, in one-letter code: Succinyl-diaminopimelate desuccinylase (380 aa).

H68 is a binding site for Zn(2+). D70 is an active-site residue. Residue D101 coordinates Zn(2+). E135 acts as the Proton acceptor in catalysis. Zn(2+) is bound by residues E136, E164, and H350.

The protein belongs to the peptidase M20A family. DapE subfamily. As to quaternary structure, homodimer. It depends on Zn(2+) as a cofactor. Requires Co(2+) as cofactor.

It catalyses the reaction N-succinyl-(2S,6S)-2,6-diaminopimelate + H2O = (2S,6S)-2,6-diaminopimelate + succinate. Its pathway is amino-acid biosynthesis; L-lysine biosynthesis via DAP pathway; LL-2,6-diaminopimelate from (S)-tetrahydrodipicolinate (succinylase route): step 3/3. Catalyzes the hydrolysis of N-succinyl-L,L-diaminopimelic acid (SDAP), forming succinate and LL-2,6-diaminopimelate (DAP), an intermediate involved in the bacterial biosynthesis of lysine and meso-diaminopimelic acid, an essential component of bacterial cell walls. The sequence is that of Succinyl-diaminopimelate desuccinylase from Tolumonas auensis (strain DSM 9187 / NBRC 110442 / TA 4).